The following is a 140-amino-acid chain: ATP synthase epsilon chain (140 aa).

Belongs to the ATPase epsilon chain family. In terms of assembly, F-type ATPases have 2 components, CF(1) - the catalytic core - and CF(0) - the membrane proton channel. CF(1) has five subunits: alpha(3), beta(3), gamma(1), delta(1), epsilon(1). CF(0) has three main subunits: a, b and c.

The protein resides in the cell inner membrane. Its function is as follows. Produces ATP from ADP in the presence of a proton gradient across the membrane. This chain is ATP synthase epsilon chain, found in Bordetella bronchiseptica (strain ATCC BAA-588 / NCTC 13252 / RB50) (Alcaligenes bronchisepticus).